A 313-amino-acid polypeptide reads, in one-letter code: Metaxin-3 (313 aa).

A disordered region spans residues 280–313; that stretch reads EKMDDNLRSSPQHRPHRHEAKPSAPASDRNSTPA.

The protein belongs to the metaxin family. As to quaternary structure, part of a large protein complex spanning both mitochondrial membranes termed the mitochondrial intermembrane space bridging (MIB) complex.

The protein resides in the mitochondrion. It is found in the mitochondrion outer membrane. In terms of biological role, could function in transport of proteins into the mitochondrion. This chain is Metaxin-3 (mtx3), found in Danio rerio (Zebrafish).